We begin with the raw amino-acid sequence, 275 residues long: Large ribosomal subunit protein uL2 (275 aa).

Over residues 38–53 (SSKAGRNNNGRITTRH) the composition is skewed to polar residues. Disordered stretches follow at residues 38–60 (SSKA…GHKQ) and 224–257 (AMNP…KGFR).

The protein belongs to the universal ribosomal protein uL2 family. Part of the 50S ribosomal subunit. Forms a bridge to the 30S subunit in the 70S ribosome.

In terms of biological role, one of the primary rRNA binding proteins. Required for association of the 30S and 50S subunits to form the 70S ribosome, for tRNA binding and peptide bond formation. It has been suggested to have peptidyltransferase activity; this is somewhat controversial. Makes several contacts with the 16S rRNA in the 70S ribosome. This is Large ribosomal subunit protein uL2 from Burkholderia pseudomallei (strain 1106a).